The sequence spans 388 residues: Cytochrome b (388 aa).

A run of 4 helical transmembrane segments spans residues 38-58, 82-104, 119-139, and 185-205; these read FGCLAGICLVIQIVTGVFLAM, WLLRYMHANGASMFLIVVHLHIF, VWCLGVVIFLLMIVTAFIGYV, and FFSLHHLLPLILAGASLLHLA. Residues His-88 and His-102 each coordinate heme b. Heme b contacts are provided by His-189 and His-203. His-208 contacts a ubiquinone. A run of 4 helical transmembrane segments spans residues 231-251, 295-315, 327-347, and 354-373; these read FYVKDLVGRVASAIFFSIWIF, AGGVAAIAPVFISLLALPFFK, IHQGIFWLLLADCLLLGWIGC, and FVTIGQISSFFFFLFFAITP.

It belongs to the cytochrome b family. In terms of assembly, the main subunits of complex b-c1 are: cytochrome b, cytochrome c1 and the Rieske protein. Requires heme b as cofactor.

Its subcellular location is the mitochondrion inner membrane. Its function is as follows. Component of the ubiquinol-cytochrome c reductase complex (complex III or cytochrome b-c1 complex) that is part of the mitochondrial respiratory chain. The b-c1 complex mediates electron transfer from ubiquinol to cytochrome c. Contributes to the generation of a proton gradient across the mitochondrial membrane that is then used for ATP synthesis. In Zea mays (Maize), this protein is Cytochrome b (MT-CYB).